An 89-amino-acid polypeptide reads, in one-letter code: Small ribosomal subunit protein uS15 (89 aa).

The protein belongs to the universal ribosomal protein uS15 family. As to quaternary structure, part of the 30S ribosomal subunit. Forms a bridge to the 50S subunit in the 70S ribosome, contacting the 23S rRNA.

In terms of biological role, one of the primary rRNA binding proteins, it binds directly to 16S rRNA where it helps nucleate assembly of the platform of the 30S subunit by binding and bridging several RNA helices of the 16S rRNA. Its function is as follows. Forms an intersubunit bridge (bridge B4) with the 23S rRNA of the 50S subunit in the ribosome. The chain is Small ribosomal subunit protein uS15 from Hyphomonas neptunium (strain ATCC 15444).